Consider the following 465-residue polypeptide: A-type ATP synthase subunit B (465 aa).

Belongs to the ATPase alpha/beta chains family. In terms of assembly, the A-type ATPase is composed of subunits A(3), B(3), C, D, E(1 or 2), F, H(2), I and proteolipid K(x).

The protein localises to the cell membrane. Component of the A-type ATP synthase that produces ATP from ADP in the presence of a proton gradient across the membrane. The B chain is a regulatory subunit. This Methanocaldococcus jannaschii (strain ATCC 43067 / DSM 2661 / JAL-1 / JCM 10045 / NBRC 100440) (Methanococcus jannaschii) protein is A-type ATP synthase subunit B.